The following is a 405-amino-acid chain: Na(+)-translocating NADH-quinone reductase subunit F (405 aa).

A helical membrane pass occupies residues Ile-3–Phe-23. Residues Gly-32 to Val-124 enclose the 2Fe-2S ferredoxin-type domain. Residues Cys-67, Cys-73, Cys-76, and Cys-108 each coordinate [2Fe-2S] cluster. The region spanning Val-127–Lys-267 is the FAD-binding FR-type domain.

The protein belongs to the NqrF family. Composed of six subunits; NqrA, NqrB, NqrC, NqrD, NqrE and NqrF. [2Fe-2S] cluster serves as cofactor. It depends on FAD as a cofactor.

It is found in the cell inner membrane. The catalysed reaction is a ubiquinone + n Na(+)(in) + NADH + H(+) = a ubiquinol + n Na(+)(out) + NAD(+). Its function is as follows. NQR complex catalyzes the reduction of ubiquinone-1 to ubiquinol by two successive reactions, coupled with the transport of Na(+) ions from the cytoplasm to the periplasm. The first step is catalyzed by NqrF, which accepts electrons from NADH and reduces ubiquinone-1 to ubisemiquinone by a one-electron transfer pathway. The sequence is that of Na(+)-translocating NADH-quinone reductase subunit F from Neisseria meningitidis serogroup C / serotype 2a (strain ATCC 700532 / DSM 15464 / FAM18).